We begin with the raw amino-acid sequence, 62 residues long: Photosystem II reaction center protein Z (62 aa).

2 helical membrane passes run 8–28 and 41–61; these read AVFA…VVFA and FSGT…NSLI.

This sequence belongs to the PsbZ family. As to quaternary structure, PSII is composed of 1 copy each of membrane proteins PsbA, PsbB, PsbC, PsbD, PsbE, PsbF, PsbH, PsbI, PsbJ, PsbK, PsbL, PsbM, PsbT, PsbY, PsbZ, Psb30/Ycf12, at least 3 peripheral proteins of the oxygen-evolving complex and a large number of cofactors. It forms dimeric complexes.

The protein resides in the plastid. It localises to the chloroplast thylakoid membrane. Functionally, may control the interaction of photosystem II (PSII) cores with the light-harvesting antenna, regulates electron flow through the 2 photosystem reaction centers. PSII is a light-driven water plastoquinone oxidoreductase, using light energy to abstract electrons from H(2)O, generating a proton gradient subsequently used for ATP formation. This is Photosystem II reaction center protein Z from Lotus japonicus (Lotus corniculatus var. japonicus).